We begin with the raw amino-acid sequence, 272 residues long: Endogenous Bornavirus-like nucleoprotein 2 (272 aa).

A disordered region spans residues 48–70; sequence MSHLRKDSQPSSPGDDAMDRSGL.

May act as an RNA-binding protein. The C-terminal region is highly homologous to the bornavirus nucleocapsid N protein that binds viral RNA and oligomerizes. The viral protein also possesses a nuclear import and a nuclear export signal. These 2 signals seem absent in EBLN-2 supporting an unrelated function in Human. In Homo sapiens (Human), this protein is Endogenous Bornavirus-like nucleoprotein 2 (EBLN2).